Consider the following 495-residue polypeptide: Glutamyl-tRNA(Gln) amidotransferase subunit A (495 aa).

Active-site charge relay system residues include Lys-78 and Ser-159. Catalysis depends on Ser-183, which acts as the Acyl-ester intermediate.

It belongs to the amidase family. GatA subfamily. Heterotrimer of A, B and C subunits.

It carries out the reaction L-glutamyl-tRNA(Gln) + L-glutamine + ATP + H2O = L-glutaminyl-tRNA(Gln) + L-glutamate + ADP + phosphate + H(+). In terms of biological role, allows the formation of correctly charged Gln-tRNA(Gln) through the transamidation of misacylated Glu-tRNA(Gln) in organisms which lack glutaminyl-tRNA synthetase. The reaction takes place in the presence of glutamine and ATP through an activated gamma-phospho-Glu-tRNA(Gln). The protein is Glutamyl-tRNA(Gln) amidotransferase subunit A of Rhizorhabdus wittichii (strain DSM 6014 / CCUG 31198 / JCM 15750 / NBRC 105917 / EY 4224 / RW1) (Sphingomonas wittichii).